The sequence spans 518 residues: Golgi-associated olfactory signaling regulator (518 aa).

The signal sequence occupies residues 1–19 (MKSFSRILFLVFLLAGLRS). Over 20 to 409 (KAAPSAPLPL…GRPRGAAGGA (390 aa)) the chain is Extracellular. Positions 38–377 (HPSETSPLKG…ATLRAPQRHS (340 aa)) are disordered. The segment covering 92–106 (DLRETPHPESPETPK) has biased composition (basic and acidic residues). Asn-124 carries N-linked (GlcNAc...) asparagine glycosylation. The span at 138 to 153 (TPGPTEMPHPGSPETP) shows a compositional bias: pro residues. N-linked (GlcNAc...) asparagine glycosylation is present at Asn-156. Composition is skewed to polar residues over residues 168 to 180 (TPNT…TPQE) and 187 to 207 (LNAT…NPTK). 2 N-linked (GlcNAc...) asparagine glycosylation sites follow: Asn-188 and Asn-220. Composition is skewed to basic and acidic residues over residues 209 to 220 (PDPKSPEKHDLN) and 236 to 247 (DPSKTPHPESHV). Polar residues-rich tracts occupy residues 248 to 270 (THNP…QNAT) and 276 to 285 (SDPQISTSLY). Asn-268 carries an N-linked (GlcNAc...) asparagine glycan. A helical membrane pass occupies residues 410–430 (LCLFFAGTALLIGIFVLLWCL). The Cytoplasmic segment spans residues 431–518 (YRRAARQRPF…SPATLPNNFV (88 aa)). Residues 477 to 518 (HIATKQPPPTPPLPPKLPPPPRGGRPQRLEALSPATLPNNFV) form a disordered region. A compositionally biased stretch (pro residues) spans 482–499 (QPPPTPPLPPKLPPPPRG).

It is found in the golgi apparatus membrane. Its function is as follows. Required for proper function of the olfactory system. May be involved in establishing the acuity of olfactory sensory signaling. This is Golgi-associated olfactory signaling regulator (GFY) from Homo sapiens (Human).